A 1183-amino-acid polypeptide reads, in one-letter code: Peroxisomal ATPase PEX6 (1183 aa).

The tract at residues 161 to 205 (ESRGKKTGEPEDGPLANGIDLNGVDDSDSDEDVLSQGDDDDENNV) is disordered. Over residues 183–204 (GVDDSDSDEDVLSQGDDDDENN) the composition is skewed to acidic residues. An AAA-cassette D1 region spans residues 576 to 785 (LPNNYISPVH…VERAMTACSE (210 aa)). Residues 878 to 1070 (GILFYGPPGT…CSDAMLKAIT (193 aa)) form an AAA-cassette D2 region. Residue 883–890 (GPPGTGKT) participates in ATP binding. Residues 1160–1183 (IMVDGPGTGGEGAFGDDGDEEGLY) form a disordered region. Acidic residues predominate over residues 1173-1183 (FGDDGDEEGLY).

It belongs to the AAA ATPase family. Interacts with PEX1; forming the PEX1-PEX6 AAA ATPase complex, which is composed of a heterohexamer formed by a trimer of PEX1-PEX6 dimers.

It localises to the cytoplasm. Its subcellular location is the cytosol. The protein resides in the peroxisome membrane. It carries out the reaction ATP + H2O = ADP + phosphate + H(+). Its function is as follows. Component of the PEX1-PEX6 AAA ATPase complex, a protein dislocase complex that mediates the ATP-dependent extraction of the PEX5 receptor from peroxisomal membranes, an essential step for PEX5 recycling. Specifically recognizes PEX5 monoubiquitinated at 'Cys-6', and pulls it out of the peroxisome lumen through the PEX2-PEX10-PEX12 retrotranslocation channel. Extraction by the PEX1-PEX6 AAA ATPase complex is accompanied by unfolding of the TPR repeats and release of bound cargo from PEX5. Regulates autophagy and biogenesis of peroxisomes and Woronin bodies. Plays important roles in mycelial growth and development and stress response. Is also essential for conidiation and fatty acid utilization. Required for nematode predation via trap formation. This is Peroxisomal ATPase PEX6 from Arthrobotrys oligospora (strain ATCC 24927 / CBS 115.81 / DSM 1491) (Nematode-trapping fungus).